We begin with the raw amino-acid sequence, 472 residues long: Transcriptional activator protein rec16 (472 aa).

The C2H2-type zinc-finger motif lies at 420-444 (FICCYCTKPFLSISKLQEHESSCSH).

Its subcellular location is the nucleus. Functionally, transcriptional activator that controls the onset of premeiotic DNA synthesis by regulating res2 and some other factor(s) in a mei2 independent cascade. This is Transcriptional activator protein rec16 (rec16) from Schizosaccharomyces pombe (strain 972 / ATCC 24843) (Fission yeast).